The primary structure comprises 62 residues: Photosystem II reaction center protein Z (62 aa).

Met1 carries the post-translational modification N-formylmethionine. At Met1–Leu4 the chain is on the lumenal side. A helical transmembrane segment spans residues Phe5–Val25. The Cytoplasmic portion of the chain corresponds to Ala26–Ser36. A helical transmembrane segment spans residues Lys37–Asn58. The Lumenal segment spans residues Phe59–Val62.

This sequence belongs to the PsbZ family. As to quaternary structure, PSII is composed of 1 copy each of membrane proteins PsbA, PsbB, PsbC, PsbD, PsbE, PsbF, PsbH, PsbI, PsbJ, PsbK, PsbL, PsbM, PsbT, PsbX, PsbY, PsbZ, Psb30/Ycf12, peripheral proteins PsbO, CyanoQ (PsbQ), PsbU, PsbV and a large number of cofactors. It forms dimeric complexes. Part of a photosystem II (PSII) assembly intermediate complex PSII-I; crystallized from a strain deleted of psbJ, it forms monomeric PSII before addition of the oxygen evolving complex. PSII-I includes 3 assembly factors not found in mature PSII (Psb27, Psb28 and Psb34). PSII binds multiple chlorophylls, carotenoids and specific lipids. serves as cofactor.

The protein resides in the cellular thylakoid membrane. Its function is as follows. May control the interaction of photosystem II (PSII) cores with the light-harvesting antenna, regulates electron flow through the 2 photosystem reaction centers. PSII is a light-driven water plastoquinone oxidoreductase, using light energy to abstract electrons from H(2)O, generating a proton gradient subsequently used for ATP formation. May also aid in binding of PsbK, Psb30/Ycf12 and the oxygen-evolving complex to PSII, at least in vitro. The polypeptide is Photosystem II reaction center protein Z (Thermosynechococcus vestitus (strain NIES-2133 / IAM M-273 / BP-1)).